The sequence spans 173 residues: Photosystem I assembly protein Ycf3 (173 aa).

TPR repeat units lie at residues 35 to 68 (AFVY…EEDP), 72 to 105 (SYIL…NPRM), and 120 to 153 (GEKA…APNN).

Belongs to the Ycf3 family.

It localises to the cellular thylakoid membrane. Functionally, essential for the assembly of the photosystem I (PSI) complex. May act as a chaperone-like factor to guide the assembly of the PSI subunits. The protein is Photosystem I assembly protein Ycf3 of Rippkaea orientalis (strain PCC 8801 / RF-1) (Cyanothece sp. (strain PCC 8801)).